The primary structure comprises 178 residues: Large ribosomal subunit protein bL25 (178 aa).

It belongs to the bacterial ribosomal protein bL25 family. CTC subfamily. Part of the 50S ribosomal subunit; part of the 5S rRNA/L5/L18/L25 subcomplex. Contacts the 5S rRNA. Binds to the 5S rRNA independently of L5 and L18.

Its function is as follows. This is one of the proteins that binds to the 5S RNA in the ribosome where it forms part of the central protuberance. This is Large ribosomal subunit protein bL25 from Helicobacter pylori (strain ATCC 700392 / 26695) (Campylobacter pylori).